We begin with the raw amino-acid sequence, 241 residues long: 1-(5-phosphoribosyl)-5-[(5-phosphoribosylamino)methylideneamino] imidazole-4-carboxamide isomerase (241 aa).

The Proton acceptor role is filled by Asp11. Asp130 serves as the catalytic Proton donor.

The protein belongs to the HisA/HisF family.

The protein localises to the cytoplasm. The enzyme catalyses 1-(5-phospho-beta-D-ribosyl)-5-[(5-phospho-beta-D-ribosylamino)methylideneamino]imidazole-4-carboxamide = 5-[(5-phospho-1-deoxy-D-ribulos-1-ylimino)methylamino]-1-(5-phospho-beta-D-ribosyl)imidazole-4-carboxamide. The protein operates within amino-acid biosynthesis; L-histidine biosynthesis; L-histidine from 5-phospho-alpha-D-ribose 1-diphosphate: step 4/9. This Acidothermus cellulolyticus (strain ATCC 43068 / DSM 8971 / 11B) protein is 1-(5-phosphoribosyl)-5-[(5-phosphoribosylamino)methylideneamino] imidazole-4-carboxamide isomerase.